The chain runs to 382 residues: Mannitol-1-phosphate 5-dehydrogenase (382 aa).

3-14 (ALHFGAGNIGRG) contributes to the NAD(+) binding site. At Lys269 the chain carries N6-acetyllysine.

Belongs to the mannitol dehydrogenase family.

It catalyses the reaction D-mannitol 1-phosphate + NAD(+) = beta-D-fructose 6-phosphate + NADH + H(+). The protein is Mannitol-1-phosphate 5-dehydrogenase of Shigella sonnei (strain Ss046).